Consider the following 278-residue polypeptide: HAUS augmin-like complex subunit 1 (278 aa).

3 coiled-coil regions span residues 49 to 79 (RDVY…LMES), 124 to 177 (SDLF…KVDN), and 249 to 277 (SLAQ…DMME).

Belongs to the HAUS1 family. As to quaternary structure, component of the HAUS augmin-like complex. The complex interacts with the gamma-tubulin ring complex and this interaction is required for spindle assembly. Associates with microtubules. The interaction with microtubules is strong during mitosis, while it is weak or absent during interphase. It is unclear whether this interaction is direct or indirect. Interacts with EML3 (phosphorylated at 'Thr-881'). Widely expressed. Expressed in pancreas, kidney, skeletal muscle, liver and heart. Weakly expressed in lung, brain and placenta.

It localises to the cytoplasm. It is found in the cytoskeleton. The protein localises to the microtubule organizing center. Its subcellular location is the centrosome. The protein resides in the spindle. It localises to the spindle pole. Contributes to mitotic spindle assembly, maintenance of centrosome integrity and completion of cytokinesis as part of the HAUS augmin-like complex. This chain is HAUS augmin-like complex subunit 1 (HAUS1), found in Homo sapiens (Human).